Here is a 209-residue protein sequence, read N- to C-terminus: Uracil phosphoribosyltransferase (209 aa).

Residues Arg79, Arg104, and 131 to 139 (DPMLATGAS) contribute to the 5-phospho-alpha-D-ribose 1-diphosphate site. Residues Ile194 and 199–201 (GDA) contribute to the uracil site. Residue Asp200 coordinates 5-phospho-alpha-D-ribose 1-diphosphate.

It belongs to the UPRTase family. The cofactor is Mg(2+).

The catalysed reaction is UMP + diphosphate = 5-phospho-alpha-D-ribose 1-diphosphate + uracil. It participates in pyrimidine metabolism; UMP biosynthesis via salvage pathway; UMP from uracil: step 1/1. With respect to regulation, allosterically activated by GTP. Catalyzes the conversion of uracil and 5-phospho-alpha-D-ribose 1-diphosphate (PRPP) to UMP and diphosphate. This is Uracil phosphoribosyltransferase from Staphylococcus saprophyticus subsp. saprophyticus (strain ATCC 15305 / DSM 20229 / NCIMB 8711 / NCTC 7292 / S-41).